A 569-amino-acid polypeptide reads, in one-letter code: Ferredoxin--nitrite reductase, chloroplastic (569 aa).

A chloroplast-targeting transit peptide spans 1 to 4; that stretch reads IPGR. The tract at residues 1–28 is disordered; that stretch reads IPGRTGRARAAVSVPPPAGEQVPTERLE. Residues cysteine 447, cysteine 453, cysteine 488, and cysteine 492 each contribute to the [4Fe-4S] cluster site. Residue cysteine 492 participates in siroheme binding.

The protein belongs to the nitrite and sulfite reductase 4Fe-4S domain family. Monomer. It depends on siroheme as a cofactor. [4Fe-4S] cluster is required as a cofactor.

The protein localises to the plastid. It localises to the chloroplast. The enzyme catalyses 6 oxidized [2Fe-2S]-[ferredoxin] + NH4(+) + 2 H2O = nitrite + 6 reduced [2Fe-2S]-[ferredoxin] + 8 H(+). It participates in nitrogen metabolism; nitrate reduction (assimilation). The chain is Ferredoxin--nitrite reductase, chloroplastic (NIR) from Zea mays (Maize).